We begin with the raw amino-acid sequence, 305 residues long: Oxygen-dependent coproporphyrinogen-III oxidase (305 aa).

Substrate is bound at residue Ser-92. Positions 96 and 106 each coordinate a divalent metal cation. His-106 serves as the catalytic Proton donor. 108 to 110 serves as a coordination point for substrate; that stretch reads NVR. Residues His-145 and His-175 each coordinate a divalent metal cation. The segment at 239-274 is important for dimerization; that stretch reads YVEFNLLFDRGTLFGLQSGGRAESILISLPPLVRWE. 257–259 serves as a coordination point for substrate; it reads GGR.

This sequence belongs to the aerobic coproporphyrinogen-III oxidase family. Homodimer. It depends on a divalent metal cation as a cofactor.

The protein localises to the cytoplasm. The enzyme catalyses coproporphyrinogen III + O2 + 2 H(+) = protoporphyrinogen IX + 2 CO2 + 2 H2O. The protein operates within porphyrin-containing compound metabolism; protoporphyrin-IX biosynthesis; protoporphyrinogen-IX from coproporphyrinogen-III (O2 route): step 1/1. In terms of biological role, involved in the heme biosynthesis. Catalyzes the aerobic oxidative decarboxylation of propionate groups of rings A and B of coproporphyrinogen-III to yield the vinyl groups in protoporphyrinogen-IX. This Xylella fastidiosa (strain M12) protein is Oxygen-dependent coproporphyrinogen-III oxidase.